The chain runs to 144 residues: Group IID secretory phospholipase A2 (144 aa).

Positions 1–19 (MRLALLCGLLLAGITATQG) are cleaved as a signal peptide. Cystine bridges form between Cys45–Cys137, Cys47–Cys63, Cys62–Cys117, Cys68–Cys144, Cys69–Cys110, Cys78–Cys103, and Cys96–Cys108. 3 residues coordinate Ca(2+): His46, Gly48, and Gly50. His66 is an active-site residue. Residue Asp67 participates in Ca(2+) binding. N-linked (GlcNAc...) asparagine glycosylation is present at Asn99. Residue Asp111 is part of the active site.

Belongs to the phospholipase A2 family. Ca(2+) is required as a cofactor. Highly expressed in secondary lymphoid tissues, spleen and lymph nodes. Expressed at a lesser extent in thymus. Expressed in CD4-positive, IL2RA/CD25-positive, FOXP3-positive Tregs (at protein level). Expressed in myeloid cell subsets resident in spleen and lymph nodes, ITGAX/CD11C-positive dendritic cells and macrophages (at protein level). Enriched in CD4-positive, ITGAM/CD11B-positive dendritic cell subset. Expressed in pulmonary ITGAX/CD11C-positive dendritic cell subset (at protein level).

The protein resides in the secreted. Its subcellular location is the cell membrane. The protein localises to the cytoplasm. The enzyme catalyses a 1,2-diacyl-sn-glycero-3-phosphoethanolamine + H2O = a 1-acyl-sn-glycero-3-phosphoethanolamine + a fatty acid + H(+). It catalyses the reaction 1-hexadecanoyl-2-(9Z-octadecenoyl)-sn-glycero-3-phosphoethanolamine + H2O = 1-hexadecanoyl-sn-glycero-3-phosphoethanolamine + (9Z)-octadecenoate + H(+). The catalysed reaction is 1-hexadecanoyl-2-(9Z,12Z-octadecadienoyl)-sn-glycero-3-phosphoethanolamine + H2O = 1-hexadecanoyl-sn-glycero-3-phosphoethanolamine + (9Z,12Z)-octadecadienoate + H(+). It carries out the reaction 1,2-dihexadecanoyl-sn-glycero-3-phospho-(1'-sn-glycerol) + H2O = 1-hexadecanoyl-sn-glycero-3-phospho-(1'-sn-glycerol) + hexadecanoate + H(+). The enzyme catalyses 1-hexadecanoyl-2-(9Z-octadecenoyl)-sn-glycero-3-phospho-(1'-sn-glycerol) + H2O = 1-hexadecanoyl-sn-glycero-3-phospho-(1'-sn-glycerol) + (9Z)-octadecenoate + H(+). It catalyses the reaction a 1,2-diacyl-sn-glycero-3-phosphocholine + H2O = a 1-acyl-sn-glycero-3-phosphocholine + a fatty acid + H(+). The catalysed reaction is 1,2-dihexadecanoyl-sn-glycero-3-phosphocholine + H2O = 1-hexadecanoyl-sn-glycero-3-phosphocholine + hexadecanoate + H(+). It carries out the reaction 1-hexadecanoyl-2-(9Z-octadecenoyl)-sn-glycero-3-phosphocholine + H2O = 1-hexadecanoyl-sn-glycero-3-phosphocholine + (9Z)-octadecenoate + H(+). The enzyme catalyses 1-hexadecanoyl-2-(9Z,12Z-octadecadienoyl)-sn-glycero-3-phosphocholine + H2O = (9Z,12Z)-octadecadienoate + 1-hexadecanoyl-sn-glycero-3-phosphocholine + H(+). It catalyses the reaction 1-hexadecanoyl-2-(4Z,7Z,10Z,13Z,16Z,19Z-docosahexaenoyl)-sn-glycero-3-phosphocholine + H2O = (4Z,7Z,10Z,13Z,16Z,19Z)-docosahexaenoate + 1-hexadecanoyl-sn-glycero-3-phosphocholine + H(+). Functionally, secretory calcium-dependent phospholipase A2 that primarily targets extracellular lipids, exerting anti-inflammatory and immunosuppressive functions. Hydrolyzes the ester bond of the fatty acyl group attached at sn-2 position of phospholipids (phospholipase A2 activity) with preference for phosphatidylethanolamines and phosphatidylglycerols over phosphatidylcholines. In draining lymph nodes, selectively hydrolyzes diacyl and alkenyl forms of phosphatidylethanolamines, releasing omega-3 polyunsaturated fatty acids (PUFAs) such as eicosapentaenoate and docosahexaenoate that are precursors of the anti-inflammatory lipid mediators, resolvins. During the resolution phase of acute inflammation drives docosahexaenoate-derived resolvin D1 synthesis, which suppresses dendritic cell activation and T-helper 1 immune response. May act in an autocrine and paracrine manner. Via a mechanism independent of its catalytic activity, promotes differentiation of regulatory T cells (Tregs) and participates in the maintenance of immune tolerance. May contribute to lipid remodeling of cellular membranes and generation of lipid mediators involved in pathogen clearance. Displays bactericidal activity against Gram-positive bacteria by directly hydrolyzing phospholipids of the bacterial membrane. The chain is Group IID secretory phospholipase A2 (Pla2g2d) from Mus musculus (Mouse).